A 369-amino-acid polypeptide reads, in one-letter code: UDP-N-acetylglucosamine--N-acetylmuramyl-(pentapeptide) pyrophosphoryl-undecaprenol N-acetylglucosamine transferase (369 aa).

UDP-N-acetyl-alpha-D-glucosamine is bound by residues 10–12 (TAG), asparagine 124, arginine 161, serine 195, and glutamine 295.

This sequence belongs to the glycosyltransferase 28 family. MurG subfamily.

The protein resides in the cell membrane. It carries out the reaction di-trans,octa-cis-undecaprenyl diphospho-N-acetyl-alpha-D-muramoyl-L-alanyl-D-glutamyl-meso-2,6-diaminopimeloyl-D-alanyl-D-alanine + UDP-N-acetyl-alpha-D-glucosamine = di-trans,octa-cis-undecaprenyl diphospho-[N-acetyl-alpha-D-glucosaminyl-(1-&gt;4)]-N-acetyl-alpha-D-muramoyl-L-alanyl-D-glutamyl-meso-2,6-diaminopimeloyl-D-alanyl-D-alanine + UDP + H(+). It participates in cell wall biogenesis; peptidoglycan biosynthesis. In terms of biological role, cell wall formation. Catalyzes the transfer of a GlcNAc subunit on undecaprenyl-pyrophosphoryl-MurNAc-pentapeptide (lipid intermediate I) to form undecaprenyl-pyrophosphoryl-MurNAc-(pentapeptide)GlcNAc (lipid intermediate II). This Acidothermus cellulolyticus (strain ATCC 43068 / DSM 8971 / 11B) protein is UDP-N-acetylglucosamine--N-acetylmuramyl-(pentapeptide) pyrophosphoryl-undecaprenol N-acetylglucosamine transferase.